The sequence spans 341 residues: N-acetyl-gamma-glutamyl-phosphate reductase (341 aa).

Cys-145 is an active-site residue.

The protein belongs to the NAGSA dehydrogenase family. Type 1 subfamily.

The protein resides in the cytoplasm. The enzyme catalyses N-acetyl-L-glutamate 5-semialdehyde + phosphate + NADP(+) = N-acetyl-L-glutamyl 5-phosphate + NADPH + H(+). Its pathway is amino-acid biosynthesis; L-arginine biosynthesis; N(2)-acetyl-L-ornithine from L-glutamate: step 3/4. Its function is as follows. Catalyzes the NADPH-dependent reduction of N-acetyl-5-glutamyl phosphate to yield N-acetyl-L-glutamate 5-semialdehyde. This is N-acetyl-gamma-glutamyl-phosphate reductase from Methanothrix thermoacetophila (strain DSM 6194 / JCM 14653 / NBRC 101360 / PT) (Methanosaeta thermophila).